Consider the following 393-residue polypeptide: Fasciculation and elongation protein zeta-1 (393 aa).

The segment at 1 to 41 is disordered; that stretch reads MEAPLVSLDEEFEDIRPCCTEDPEEKPQSLYGTSPHHLEDP. The residue at position 58 (Ser58) is a Phosphoserine. The segment at 130–154 is disordered; it reads NGNSSDTEIHEKEEEDEFIEKSEND. A coiled-coil region spans residues 231-299; that stretch reads SELTELLDQV…KKRRKEKGLS (69 aa). Residues Ser299 and Ser317 each carry the phosphoserine modification.

The protein belongs to the zygin family. As to quaternary structure, homodimer. Interacts with UBE4B and SAP30L. Interacts with SCOC and ULK1; SCOC interferes with ULK1-binding to FEZ1. Directly interacts with SCOC and UVRAG. Stabilizes the interaction between SCOC and UVRAG during amino acid starvation. Interacts with the NH2-terminal variable region (V1) of PKC zeta and weakly with that of PKC epsilon. In terms of processing, phosphorylated by protein kinase C zeta; which enhances interaction with UBE4B and polyubiquitination. Post-translationally, polyubiquitinated in a UBE4B-dependent manner; which does not lead to proteasomal degradation and may be important for neurogenic activity. Polyubiquitin linkage seems to be mainly through Lys-26. As to expression, brain.

It localises to the cytoplasm. The protein localises to the cytoskeleton. Its subcellular location is the microtubule organizing center. The protein resides in the centrosome. It is found in the cell membrane. May be involved in axonal outgrowth as component of the network of molecules that regulate cellular morphology and axon guidance machinery. May participate in the transport of mitochondria and other cargos along microtubules. This is Fasciculation and elongation protein zeta-1 (Fez1) from Rattus norvegicus (Rat).